Reading from the N-terminus, the 165-residue chain is 6,7-dimethyl-8-ribityllumazine synthase (165 aa).

Residues Trp-26, 58-60 (SIE), and 80-82 (VVI) each bind 5-amino-6-(D-ribitylamino)uracil. (2S)-2-hydroxy-3-oxobutyl phosphate is bound at residue 85-86 (GT). The active-site Proton donor is the His-88. Asn-113 serves as a coordination point for 5-amino-6-(D-ribitylamino)uracil. Residue Arg-127 coordinates (2S)-2-hydroxy-3-oxobutyl phosphate.

Belongs to the DMRL synthase family.

The enzyme catalyses (2S)-2-hydroxy-3-oxobutyl phosphate + 5-amino-6-(D-ribitylamino)uracil = 6,7-dimethyl-8-(1-D-ribityl)lumazine + phosphate + 2 H2O + H(+). It participates in cofactor biosynthesis; riboflavin biosynthesis; riboflavin from 2-hydroxy-3-oxobutyl phosphate and 5-amino-6-(D-ribitylamino)uracil: step 1/2. Its function is as follows. Catalyzes the formation of 6,7-dimethyl-8-ribityllumazine by condensation of 5-amino-6-(D-ribitylamino)uracil with 3,4-dihydroxy-2-butanone 4-phosphate. This is the penultimate step in the biosynthesis of riboflavin. This Saccharopolyspora erythraea (strain ATCC 11635 / DSM 40517 / JCM 4748 / NBRC 13426 / NCIMB 8594 / NRRL 2338) protein is 6,7-dimethyl-8-ribityllumazine synthase.